A 352-amino-acid chain; its full sequence is Protein-glutamate methylesterase/protein-glutamine glutaminase 2 (352 aa).

The 116-residue stretch at 1 to 116 (MVVDDSAVVR…KQFLTDSADE (116 aa)) folds into the Response regulatory domain. At Asp-50 the chain carries 4-aspartylphosphate. One can recognise a CheB-type methylesterase domain in the interval 162–352 (AQTTERIVAI…MAREIVTQLQ (191 aa)). Active-site residues include Ser-174, His-200, and Asp-296.

Belongs to the CheB family. Phosphorylated by CheA. Phosphorylation of the N-terminal regulatory domain activates the methylesterase activity.

Its subcellular location is the cytoplasm. It catalyses the reaction [protein]-L-glutamate 5-O-methyl ester + H2O = L-glutamyl-[protein] + methanol + H(+). It carries out the reaction L-glutaminyl-[protein] + H2O = L-glutamyl-[protein] + NH4(+). Functionally, involved in chemotaxis. Part of a chemotaxis signal transduction system that modulates chemotaxis in response to various stimuli. Catalyzes the demethylation of specific methylglutamate residues introduced into the chemoreceptors (methyl-accepting chemotaxis proteins or MCP) by CheR. Also mediates the irreversible deamidation of specific glutamine residues to glutamic acid. The polypeptide is Protein-glutamate methylesterase/protein-glutamine glutaminase 2 (Xanthomonas axonopodis pv. citri (strain 306)).